We begin with the raw amino-acid sequence, 130 residues long: ATP synthase epsilon chain (130 aa).

It belongs to the ATPase epsilon chain family. In terms of assembly, F-type ATPases have 2 components, CF(1) - the catalytic core - and CF(0) - the membrane proton channel. CF(1) has five subunits: alpha(3), beta(3), gamma(1), delta(1), epsilon(1). CF(0) has three main subunits: a, b and c.

The protein resides in the cell inner membrane. Its function is as follows. Produces ATP from ADP in the presence of a proton gradient across the membrane. This chain is ATP synthase epsilon chain, found in Campylobacter hominis (strain ATCC BAA-381 / DSM 21671 / CCUG 45161 / LMG 19568 / NCTC 13146 / CH001A).